The chain runs to 281 residues: Cis-2,3-dihydrobiphenyl-2,3-diol dehydrogenase (281 aa).

10–34 is a binding site for NAD(+); sequence ITGGASGLGRALVDRFVAEGARVAV. Serine 142 is a binding site for substrate. The active-site Proton acceptor is tyrosine 155.

This sequence belongs to the short-chain dehydrogenases/reductases (SDR) family. In terms of assembly, homotetramer.

It catalyses the reaction (2R,3S)-3-phenylcyclohexa-3,5-diene-1,2-diol + NAD(+) = biphenyl-2,3-diol + NADH + H(+). Its pathway is xenobiotic degradation; biphenyl degradation; 2-hydroxy-2,4-pentadienoate and benzoate from biphenyl: step 2/4. In Comamonas testosteroni (Pseudomonas testosteroni), this protein is Cis-2,3-dihydrobiphenyl-2,3-diol dehydrogenase (bphB).